The primary structure comprises 308 residues: MPRNIHYVKSKTTAVFEGIPGVGKSTITTEAARELKRRLGDEYIIFLNFAPLEGDAVETVLATNTKGSKRGMDFIRMVYDPEIKAENLHFATTVTGQLIAKELKFNSEYVVDKSKGKKHLINIIERNSASAAGIFIAGNYYNMRLASDLPGDVRNRYDGDWKNVVHTQNNMAAAAKNVFLTADESERFIIVFLETDYKKAFERVVKRGRNWEADKMTIDYMRELDNLQRQYDGLVDEDKALHWKRLYPVEQVKTIHFDVDKYYTGKEETKERDIINMVEDCNEVLFRHLIVPERKSLWKRFMDFVLPK.

Residues glutamate 212–histidine 242 are a coiled coil.

This is an uncharacterized protein from Ostreid herpesvirus 1 (isolate France) (OsHV-1).